A 426-amino-acid polypeptide reads, in one-letter code: GTPase Obg (426 aa).

The region spanning 1-158 (MFVDQVSVYV…RNIKVELKLI (158 aa)) is the Obg domain. Disordered stretches follow at residues 66–86 (GKRG…DPLV) and 119–146 (GGRG…GEPG). Residues 159–329 (ADVGLVGFPS…LLFAIADKLE (171 aa)) enclose the OBG-type G domain. Residues 165-172 (GFPSVGKS), 190-194 (FTTLS), 212-215 (DLPG), 282-285 (NKMD), and 310-312 (SAL) contribute to the GTP site. Ser172 and Thr192 together coordinate Mg(2+). The region spanning 348–426 (RYQKEEDPFH…LLEYEFEFIE (79 aa)) is the OCT domain.

Belongs to the TRAFAC class OBG-HflX-like GTPase superfamily. OBG GTPase family. In terms of assembly, monomer. The cofactor is Mg(2+).

Its subcellular location is the cytoplasm. In terms of biological role, an essential GTPase which binds GTP, GDP and possibly (p)ppGpp with moderate affinity, with high nucleotide exchange rates and a fairly low GTP hydrolysis rate. Plays a role in control of the cell cycle, stress response, ribosome biogenesis and in those bacteria that undergo differentiation, in morphogenesis control. The polypeptide is GTPase Obg (Oceanobacillus iheyensis (strain DSM 14371 / CIP 107618 / JCM 11309 / KCTC 3954 / HTE831)).